Consider the following 417-residue polypeptide: Hyaluronidase-3 (417 aa).

The signal sequence occupies residues 1 to 20; sequence MTTQLGPALVLGVALCLGCG. 5 disulfide bridges follow: Cys-42–Cys-331, Cys-205–Cys-220, Cys-356–Cys-367, Cys-361–Cys-395, and Cys-397–Cys-406. An N-linked (GlcNAc...) asparagine glycan is attached at Asn-69. Catalysis depends on Glu-129, which acts as the Proton donor. N-linked (GlcNAc...) asparagine glycosylation occurs at Asn-215. Positions 352–407 constitute an EGF-like domain; it reads AAMACSHQRCHGHGRCARRDPGQMEAFLHLWPDGSLGDWKSFSCHCYWGWAGPTCQ.

The protein belongs to the glycosyl hydrolase 56 family. In terms of processing, N-glycosylated. In terms of tissue distribution, expressed in sperm. Highly expressed in epidermis of the skin, where it is expressed intracellularily in the deep horny layer (at protein level). Bone marrow, testis and kidney.

The protein localises to the secreted. Its subcellular location is the cell membrane. It is found in the cytoplasmic vesicle. The protein resides in the secretory vesicle. It localises to the acrosome. The protein localises to the endoplasmic reticulum. Its subcellular location is the early endosome. It catalyses the reaction Random hydrolysis of (1-&gt;4)-linkages between N-acetyl-beta-D-glucosamine and D-glucuronate residues in hyaluronate.. Its function is as follows. Facilitates sperm penetration into the layer of cumulus cells surrounding the egg by digesting hyaluronic acid. Involved in induction of the acrosome reaction in the sperm. Involved in follicular atresia, the breakdown of immature ovarian follicles that are not selected to ovulate. Induces ovarian granulosa cell apoptosis, possibly via apoptotic signaling pathway involving CASP8 and CASP3 activation, and poly(ADP-ribose) polymerase (PARP) cleavage. Has no hyaluronidase activity in embryonic fibroblasts in vitro. Has no hyaluronidase activity in granulosa cells in vitro. This chain is Hyaluronidase-3 (HYAL3), found in Homo sapiens (Human).